A 596-amino-acid chain; its full sequence is Potassium-transporting ATPase potassium-binding subunit (596 aa).

The next 10 helical transmembrane spans lie at 6 to 26 (ILTI…LGGF), 67 to 87 (AIGL…LQLF), 136 to 156 (GLTT…IALI), 177 to 197 (ITLY…VGQG), 283 to 303 (LSNF…CFTF), 314 to 334 (WVVL…AVHF), 413 to 433 (GLYG…LMIG), 450 to 470 (MVAI…AIAV), 518 to 538 (MLAI…LALA), and 560 to 580 (LFIV…YVPA).

It belongs to the KdpA family. In terms of assembly, the system is composed of three essential subunits: KdpA, KdpB and KdpC.

The protein resides in the cell inner membrane. Its function is as follows. Part of the high-affinity ATP-driven potassium transport (or Kdp) system, which catalyzes the hydrolysis of ATP coupled with the electrogenic transport of potassium into the cytoplasm. This subunit binds the periplasmic potassium ions and delivers the ions to the membrane domain of KdpB through an intramembrane tunnel. This chain is Potassium-transporting ATPase potassium-binding subunit, found in Polynucleobacter asymbioticus (strain DSM 18221 / CIP 109841 / QLW-P1DMWA-1) (Polynucleobacter necessarius subsp. asymbioticus).